Here is a 103-residue protein sequence, read N- to C-terminus: Large ribosomal subunit protein bL21 (103 aa).

The protein belongs to the bacterial ribosomal protein bL21 family. As to quaternary structure, part of the 50S ribosomal subunit. Contacts protein L20.

Its function is as follows. This protein binds to 23S rRNA in the presence of protein L20. This Tolumonas auensis (strain DSM 9187 / NBRC 110442 / TA 4) protein is Large ribosomal subunit protein bL21.